A 577-amino-acid polypeptide reads, in one-letter code: CDPK-related kinase 7 (577 aa).

The interval 1 to 38 is disordered; that stretch reads MGLCHGKPIEQQSKNLPISNEIEETPKNSSQKAKSSGF. A lipid anchor (N-myristoyl glycine) is attached at glycine 2. The Protein kinase domain maps to 124-386; the sequence is YEIDGEVGRG…AAQALCHPWL (263 aa). ATP-binding positions include 130–138 and lysine 156; that span reads VGRGHFGYT. Aspartate 252 functions as the Proton acceptor in the catalytic mechanism. Serine 292 is subject to Phosphoserine. The residue at position 334 (serine 334) is a Phosphoserine; by CPK1, CPK10 and CPK34. Residues 391–421 form an autoinhibitory domain region; sequence ELKIPSDMIIYKLVKVYIMSSSLRKSALAAL. A calmodulin binding (CaMBD) region spans residues 410–430; that stretch reads SSSLRKSALAALAKTLTVPQL. EF-hand domains follow at residues 428 to 464, 465 to 500, 501 to 540, and 543 to 572; these read PQLTYLQEQFNLLGPSKNGYISMQNYKTAILKSSTEA, TKDSRVLDFVHMISCLQYKKLDFEEFCASALSVYQL, EAMETWEQHARRAYELYEKDGNRVIMIEELATELGLGPSV, and HVVLQDWIRHSDGKLSFLGFVRLLHGVSSR. The Ca(2+) site is built by serine 443, asparagine 445, tyrosine 447, lysine 484, glutamate 489, aspartate 520, asparagine 522, glutamate 529, aspartate 554, and lysine 556. Serine 558 bears the Phosphoserine mark.

Belongs to the protein kinase superfamily. Ser/Thr protein kinase family. CDPK subfamily. Binds calmodulin (CaM) in a calcium-dependent manner. Autophosphorylated.

It localises to the membrane. The catalysed reaction is L-seryl-[protein] + ATP = O-phospho-L-seryl-[protein] + ADP + H(+). It carries out the reaction L-threonyl-[protein] + ATP = O-phospho-L-threonyl-[protein] + ADP + H(+). With respect to regulation, activated by calcium and calmodulin. Autophosphorylation may play an important role in the regulation of the kinase activity. Functionally, may play a role in signal transduction pathways that involve calcium as a second messenger. The sequence is that of CDPK-related kinase 7 (CRK7) from Arabidopsis thaliana (Mouse-ear cress).